The primary structure comprises 63 residues: Protease 2 small chain (63 aa).

The region spanning 11-63 (QWGLSGTYGIRANTAWDNGYQGQGKIIAVVDTGITDHPDLLANRTSPLGYDFI) is the Peptidase S8 domain.

It belongs to the peptidase S8 family. In terms of assembly, heterodimer of a large and a small chain.

It localises to the secreted. In Achromobacter lyticus, this protein is Protease 2 small chain.